Here is a 490-residue protein sequence, read N- to C-terminus: Tektin-3 (490 aa).

Thr-7, Thr-9, and Thr-10 each carry an O-linked (GalNAc...) threonine glycan. N-linked (GlcNAc...) asparagine glycans are attached at residues Asn-41, Asn-86, Asn-103, Asn-111, Asn-276, and Asn-344. A coiled-coil region spans residues 424–451 (VHEVDDTIQTLQQRLRDAEDTLQSLVHI).

The protein belongs to the tektin family. As to quaternary structure, microtubule inner protein component of sperm flagellar doublet microtubules. Interacts with TEKT1, TEKT2, TEKT4 and TEKT5. Interacts with CCDC38. Post-translationally, N- and O-glycosylated. May be proteolytically processed during the epididymal transit of spermatozoa. In terms of processing, ubiquitinated, leading to its degradation. Deubiquitinated by USP16, promoting its stability. In terms of tissue distribution, expressed in spermatozoa. Expressed in airway epithelial cells.

The protein localises to the cytoplasm. Its subcellular location is the cytoskeleton. It is found in the cilium axoneme. It localises to the flagellum axoneme. The protein resides in the cytoplasmic vesicle. The protein localises to the secretory vesicle. Its subcellular location is the acrosome outer membrane. Microtubule inner protein (MIP) part of the dynein-decorated doublet microtubules (DMTs) in cilia and flagellar axoneme. Forms filamentous polymers in the walls of ciliary and flagellar microtubules. Required for normal sperm mobility. This is Tektin-3 (TEKT3) from Homo sapiens (Human).